Reading from the N-terminus, the 317-residue chain is Annexin A13 (317 aa).

The N-myristoyl glycine moiety is linked to residue Gly-2. 4 Annexin repeats span residues 15 to 86 (FDAD…ALLD), 87 to 158 (RPNE…SLLQ), 170 to 242 (ELAG…TIVR), and 246 to 317 (DLEG…ALLH).

Belongs to the annexin family. As to quaternary structure, monomer and homodimer. In terms of tissue distribution, detected on the tips of microvilli in small intestine (at protein level).

It localises to the apical cell membrane. It is found in the cell membrane. The protein localises to the cytoplasmic vesicle. Binds to membranes enriched in phosphatidylserine or phosphatidylglycerol in a calcium-dependent manner. Half-maximal membrane binding requires about 60 uM calcium. Does not bind to membranes that lack phospholipids with an acidic headgroup. This is Annexin A13 (Anxa13) from Mus musculus (Mouse).